The chain runs to 1514 residues: ABC transporter C family member 3 (1514 aa).

Transmembrane regions (helical) follow at residues 35–55 (PLFLRWLSGFLHSVLLLVLFF), 83–103 (ALFCSLALSLLNLVLMSLSGF), 116–136 (LVSSLGFLLGMVSWGVLSICL), 153–173 (LWLVFYLVVSCYSLVVDFVMY), 183–203 (LLVFDIVAFIAAVFLGYVAVL), 325–345 (ILVTAFFAFIYTVASYVGPAL), 364–386 (YVLVITFFAAKIVECLSQRHWFF), 439–459 (WYMHDPWMVLLQVGLALWILY), 463–483 (GLASIAALVATIIVMLINFPF), and 551–571 (FVFWGAPTLVSVSTFGACILL). In terms of domain architecture, ABC transmembrane type-1 1 spans 325–606 (ILVTAFFAFI…LPDTISMIVQ (282 aa)). The ABC transporter 1 domain occupies 640–863 (VEVINSTLSW…GTDFMELIGA (224 aa)). 675–682 (GTVGSGKS) serves as a coordination point for ATP. Helical transmembrane passes span 940–960 (YITLAYGGALVPFILLGQVLF), 987–1007 (LSTLMIVYVALAFGSSLCILL), 1077–1097 (IGIIGVMSQVSWLVFLVFIPV), 1181–1201 (LSSLTFVFSLVFLVSIPTGVI), and 1205–1225 (LAGLAVTYGLSLNTLQAWLIW). The ABC transmembrane type-1 2 domain occupies 950–1232 (VPFILLGQVL…LIWTLCNLEN (283 aa)). Positions 1271–1503 (IRDLQVRYAP…KSSSFSKLVA (233 aa)) constitute an ABC transporter 2 domain. 1303–1310 (GRTGSGKS) provides a ligand contact to ATP.

This sequence belongs to the ABC transporter superfamily. ABCC family. Conjugate transporter (TC 3.A.1.208) subfamily. As to expression, ubiquitous.

Its subcellular location is the membrane. It carries out the reaction ATP + H2O + xenobioticSide 1 = ADP + phosphate + xenobioticSide 2.. With respect to regulation, glutathione-conjugate transport is inhibited by decyl-glutathione and, to a lower extent, by GS-GS, but not by GSH. All transports are inhibited by vanadate. Its function is as follows. Pump for glutathione S-conjugates. Mediates the transport of glutathione conjugates such as chlorodinitrobenzene-GS (DNB-GS), and of chlorophyll catabolites such as Bn-NCC-1. Also transports heavy metals such as cadmium (Cd). This chain is ABC transporter C family member 3 (ABCC3), found in Arabidopsis thaliana (Mouse-ear cress).